The primary structure comprises 601 residues: Alpha-terpineol synthase, chloroplastic (601 aa).

A chloroplast-targeting transit peptide spans 1–47 (MSTISIHHVGILRNPLHSKSKRASINKPWSLSLPRSSSASRLVEPCR). Residues aspartate 357 and aspartate 361 each contribute to the Mn(2+) site. Residues 357–361 (DDVYD) carry the DDXXD motif motif. Homodimerization stretches follow at residues 363 to 369 (YGTLDEL) and 435 to 471 (EAEWYKSGYTPSLEEYLTIAKISIASLTILLSVELSL). Mn(2+) contacts are provided by aspartate 499 and glutamate 507.

Belongs to the terpene synthase family. Homodimer. The cofactor is Mn(2+). Mg(2+) serves as cofactor.

It is found in the plastid. The protein resides in the chloroplast. The catalysed reaction is (2E)-geranyl diphosphate + H2O = (S)-alpha-terpineol + diphosphate. The enzyme catalyses (2E)-geranyl diphosphate + H2O = (R)-alpha-terpineol + diphosphate. It participates in secondary metabolite biosynthesis; terpenoid biosynthesis. Involved in the biosynthesis of phenolic monoterpenes natural products. Monoterpene synthase which catalyzes the conversion of geranyl diphosphate (GPP) to alpha-terpineol (isomer is not determined). The sequence is that of Alpha-terpineol synthase, chloroplastic from Thymus caespititius (Cretan thyme).